A 187-amino-acid chain; its full sequence is Tetraheme c-type cytochrome CymA (187 aa).

Over 1–12 the chain is Cytoplasmic; sequence MNWRALFKPSAK. Residues 13-33 traverse the membrane as a helical segment; that stretch reads YSILALLVVGIVIGVVGYFAT. At 34-187 the chain is on the periplasmic side; it reads QQTLHATSTD…KGVAHPYPKG (154 aa). The heme c site is built by C46, C49, H64, C75, C78, H79, D97, C136, C139, H140, C173, C176, H177, and H182.

Belongs to the NapC/NirT/NrfH family. In terms of assembly, homodimer. It depends on heme c as a cofactor.

The protein localises to the cell inner membrane. It catalyses the reaction a quinol + 2 Fe(III)-[cytochrome c](out) = a quinone + 2 Fe(II)-[cytochrome c](out) + 2 H(+)(out). Spectroscopic studies suggest that CymA requires a non-heme cofactor for quinol oxidation. Quinol dehydrogenase involved in several anaerobic electron transfer pathways. Acquires electrons from the membrane quinone pool and mediates their transfer to several periplasmic terminal reductases and redox shuttles, including the fumarate reductase FccA, the small tetraheme cytochrome (STC), the c-type cytochrome MtrA, the nitrate reductase NapA (either through NapB or directly), the nitrite reductase NrfA and probably also the DmsE subunit of dimethyl sulfoxide (DMSO) reductase. Required for growth on fumarate and on DMSO, and for the reduction of iron(III), manganese(IV), nitrite and nitrate. Not essential for growth on trimethylamine-N-oxide (TMAO). The sequence is that of Tetraheme c-type cytochrome CymA from Shewanella oneidensis (strain ATCC 700550 / JCM 31522 / CIP 106686 / LMG 19005 / NCIMB 14063 / MR-1).